We begin with the raw amino-acid sequence, 161 residues long: Abscisic acid receptor PYL11 (161 aa).

The segment at 3–154 (TSQKYHTCGS…NLKSLAKLSE (152 aa)) is START-like. Abscisate contacts are provided by residues Lys39, 68-73 (AEFSRE), 95-101 (RLVNYRS), and Glu119. A Gate loop motif is present at residues 64–68 (SGLPA). Positions 94–96 (HRL) match the Latch loop motif.

It belongs to the PYR/PYL/RCAR abscisic acid intracellular receptor family. Homodimer. Binds ABA on one subunit only. Interacts with PP2Cs. Binds to CARs protein in an ABA-independent manner, both at the plasma membrane and in the nucleus. Interacts with I-2 and TOPP1.

The protein resides in the cytoplasm. It is found in the nucleus. It localises to the cell membrane. Functionally, receptor for abscisic acid (ABA) required for ABA-mediated responses such as stomatal closure and germination inhibition. Inhibits the activity of group-A protein phosphatases type 2C (PP2Cs) when activated by ABA. Suppresses the phosphatase activity of TOPP1 in a dose-dependent manner in vitro. The sequence is that of Abscisic acid receptor PYL11 (PYL11) from Arabidopsis thaliana (Mouse-ear cress).